The sequence spans 83 residues: Cytochrome b559 subunit alpha (83 aa).

The helical transmembrane segment at 21–35 (VIHSITIPSLFIAGW) threads the bilayer. His-23 is a heme binding site.

This sequence belongs to the PsbE/PsbF family. Heterodimer of an alpha subunit and a beta subunit. PSII is composed of 1 copy each of membrane proteins PsbA, PsbB, PsbC, PsbD, PsbE, PsbF, PsbH, PsbI, PsbJ, PsbK, PsbL, PsbM, PsbT, PsbX, PsbY, PsbZ, Psb30/Ycf12, at least 3 peripheral proteins of the oxygen-evolving complex and a large number of cofactors. It forms dimeric complexes. Heme b is required as a cofactor.

The protein localises to the plastid. It localises to the chloroplast thylakoid membrane. Its function is as follows. This b-type cytochrome is tightly associated with the reaction center of photosystem II (PSII). PSII is a light-driven water:plastoquinone oxidoreductase that uses light energy to abstract electrons from H(2)O, generating O(2) and a proton gradient subsequently used for ATP formation. It consists of a core antenna complex that captures photons, and an electron transfer chain that converts photonic excitation into a charge separation. The polypeptide is Cytochrome b559 subunit alpha (Tupiella akineta (Green alga)).